Reading from the N-terminus, the 313-residue chain is uncharacterized protein (313 aa).

This is an uncharacterized protein from Bacillus subtilis (strain 168).